Here is a 473-residue protein sequence, read N- to C-terminus: Arginine biosynthesis bifunctional protein ArgJ, mitochondrial (473 aa).

The substrate site is built by Thr201, Lys230, Thr241, Glu328, Asn468, and Thr473. Residue Thr241 is the Nucleophile of the active site.

Belongs to the ArgJ family. In terms of assembly, heterodimer of an alpha and a beta chain. In terms of processing, the alpha and beta chains are autoproteolytically processed from a single precursor protein within the mitochondrion.

The protein resides in the mitochondrion matrix. The enzyme catalyses N(2)-acetyl-L-ornithine + L-glutamate = N-acetyl-L-glutamate + L-ornithine. The catalysed reaction is L-glutamate + acetyl-CoA = N-acetyl-L-glutamate + CoA + H(+). It participates in amino-acid biosynthesis; L-arginine biosynthesis; L-ornithine and N-acetyl-L-glutamate from L-glutamate and N(2)-acetyl-L-ornithine (cyclic): step 1/1. It functions in the pathway amino-acid biosynthesis; L-arginine biosynthesis; N(2)-acetyl-L-ornithine from L-glutamate: step 1/4. Its function is as follows. Catalyzes two activities which are involved in the cyclic version of arginine biosynthesis: the synthesis of acetylglutamate from glutamate and acetyl-CoA, and of ornithine by transacetylation between acetylornithine and glutamate. The polypeptide is Arginine biosynthesis bifunctional protein ArgJ, mitochondrial (Ajellomyces capsulatus (strain G186AR / H82 / ATCC MYA-2454 / RMSCC 2432) (Darling's disease fungus)).